The chain runs to 122 residues: Large ribosomal subunit protein uL14c (122 aa).

It belongs to the universal ribosomal protein uL14 family. As to quaternary structure, part of the 50S ribosomal subunit.

The protein localises to the plastid. The protein resides in the chloroplast. Functionally, binds to 23S rRNA. The sequence is that of Large ribosomal subunit protein uL14c from Dioscorea elephantipes (Elephant's foot yam).